A 748-amino-acid chain; its full sequence is Catalase-peroxidase (748 aa).

The tryptophyl-tyrosyl-methioninium (Trp-Tyr) (with M-264) cross-link spans 92–238 (WHSAGTYRIG…LAAVQMGLIY (147 aa)). Residue H93 is the Proton acceptor of the active site. Residues 238 to 264 (YVNPEGPDGNPDPIASARDIRDTFARM) constitute a cross-link (tryptophyl-tyrosyl-methioninium (Tyr-Met) (with W-92)). H279 contacts heme b.

This sequence belongs to the peroxidase family. Peroxidase/catalase subfamily. Homodimer or homotetramer. Heme b is required as a cofactor. Post-translationally, formation of the three residue Trp-Tyr-Met cross-link is important for the catalase, but not the peroxidase activity of the enzyme.

The catalysed reaction is H2O2 + AH2 = A + 2 H2O. It catalyses the reaction 2 H2O2 = O2 + 2 H2O. In terms of biological role, bifunctional enzyme with both catalase and broad-spectrum peroxidase activity. The sequence is that of Catalase-peroxidase from Xanthomonas euvesicatoria pv. vesicatoria (strain 85-10) (Xanthomonas campestris pv. vesicatoria).